Here is a 243-residue protein sequence, read N- to C-terminus: Pyridoxine 5'-phosphate synthase (243 aa).

N9 contributes to the 3-amino-2-oxopropyl phosphate binding site. A 1-deoxy-D-xylulose 5-phosphate-binding site is contributed by 11–12; the sequence is DH. A 3-amino-2-oxopropyl phosphate-binding site is contributed by R20. The active-site Proton acceptor is the H45. 2 residues coordinate 1-deoxy-D-xylulose 5-phosphate: R47 and H52. E72 serves as the catalytic Proton acceptor. T102 is a binding site for 1-deoxy-D-xylulose 5-phosphate. H193 functions as the Proton donor in the catalytic mechanism. 3-amino-2-oxopropyl phosphate contacts are provided by residues G194 and 215–216; that span reads GH.

The protein belongs to the PNP synthase family. In terms of assembly, homooctamer; tetramer of dimers.

Its subcellular location is the cytoplasm. It carries out the reaction 3-amino-2-oxopropyl phosphate + 1-deoxy-D-xylulose 5-phosphate = pyridoxine 5'-phosphate + phosphate + 2 H2O + H(+). Its pathway is cofactor biosynthesis; pyridoxine 5'-phosphate biosynthesis; pyridoxine 5'-phosphate from D-erythrose 4-phosphate: step 5/5. Its function is as follows. Catalyzes the complicated ring closure reaction between the two acyclic compounds 1-deoxy-D-xylulose-5-phosphate (DXP) and 3-amino-2-oxopropyl phosphate (1-amino-acetone-3-phosphate or AAP) to form pyridoxine 5'-phosphate (PNP) and inorganic phosphate. In Salmonella paratyphi A (strain ATCC 9150 / SARB42), this protein is Pyridoxine 5'-phosphate synthase.